Here is a 241-residue protein sequence, read N- to C-terminus: 6-phosphogluconolactonase (241 aa).

Belongs to the glucosamine/galactosamine-6-phosphate isomerase family. 6-phosphogluconolactonase subfamily.

It carries out the reaction 6-phospho-D-glucono-1,5-lactone + H2O = 6-phospho-D-gluconate + H(+). The protein operates within carbohydrate degradation; pentose phosphate pathway; D-ribulose 5-phosphate from D-glucose 6-phosphate (oxidative stage): step 2/3. Its function is as follows. Hydrolysis of 6-phosphogluconolactone to 6-phosphogluconate. This is 6-phosphogluconolactonase (pgl) from Treponema pallidum (strain Nichols).